Consider the following 489-residue polypeptide: ATF/CREB activator 1 (489 aa).

A bZIP domain is found at 384–447 (AWKRARLLER…QKMKKISRLH (64 aa)). The tract at residues 386-406 (KRARLLERNRIAASKCRQRKK) is basic motif. Residues 412-419 (LQREFDQI) form a leucine-zipper region.

This sequence belongs to the bZIP family.

Its subcellular location is the nucleus. In terms of biological role, transcriptional activator of promoters containing ATF/CREB sites. Can independently stimulate transcription through ATF/CREB sites. Important for a variety of biological functions including growth on non-optimal carbon sources. Regulates the expression of COS8. Has efficient silencing blocking activities. The sequence is that of ATF/CREB activator 1 (ACA1) from Saccharomyces cerevisiae (strain ATCC 204508 / S288c) (Baker's yeast).